The chain runs to 387 residues: MQQPPSNAAGAGQIPSGQQHLWMMMQQQQQQQQMQLSAAPLGQHQYGIGSQNPGSASDVKSLWIGDLQQWMDENYIMSVFAQSGEATSAKVIRNKLTGQSEGYGFIEFVSHSVAERVLQTYNGAPMPSTEQTFRLNWAQAGAGEKRFQTEGPDHTIFVGDLAPEVTDYMLSDTFKNVYGSVKGAKVVLDRTTGRSKGYGFVRFADENEQMRAMTEMNGQYCSTRPMRIGPAANKNALPMQPAMYQNTQGANAGDNDPNNTTIFVGGLDANVTDDELKSIFGQFGELLHVKIPPGKRCGFVQYANKASAEHALSVLNGTQLGGQSIRLSWGRSPNKQSDQAQWNGGGYYGYPPQPQGGYGYAAQPPTQDPNAYYGGYTGYGNYQQQRQ.

3 consecutive RRM domains span residues 60–140 (KSLW…WAQA), 154–233 (HTIF…PAAN), and 260–332 (TTIF…WGRS). Residues 329–342 (WGRSPNKQSDQAQW) show a composition bias toward polar residues. Residues 329–387 (WGRSPNKQSDQAQWNGGGYYGYPPQPQGGYGYAAQPPTQDPNAYYGGYTGYGNYQQQRQ) are disordered.

Belongs to the polyadenylate-binding RBP45 family. Interacts with the poly(A) tail of mRNA in nucleus. Mostly expressed in seedlings, and, to a lower extent, in leaves, stems, and flowers. Present in immature anther tissues (tapetum cells) and mature pollen grains.

Its subcellular location is the nucleus. Heterogeneous nuclear ribonucleoprotein (hnRNP)-protein binding the poly(A) tail of mRNA and probably involved in some steps of pre-mRNA maturation. This chain is Polyadenylate-binding protein RBP45A (RBP45A), found in Arabidopsis thaliana (Mouse-ear cress).